Here is a 725-residue protein sequence, read N- to C-terminus: Probable dipeptidyl-peptidase 5 (725 aa).

Residues M1–A18 form the signal peptide. N-linked (GlcNAc...) asparagine glycans are attached at residues N75, N96, N153, N258, N383, and N453. S563 acts as the Charge relay system in catalysis. N610 carries N-linked (GlcNAc...) asparagine glycosylation. Residues D646 and H678 each act as charge relay system in the active site.

Belongs to the peptidase S9C family.

The protein localises to the secreted. In terms of biological role, extracellular dipeptidyl-peptidase which removes N-terminal dipeptides sequentially from polypeptides having unsubstituted N-termini. This Aspergillus flavus (strain ATCC 200026 / FGSC A1120 / IAM 13836 / NRRL 3357 / JCM 12722 / SRRC 167) protein is Probable dipeptidyl-peptidase 5 (dpp5).